A 479-amino-acid polypeptide reads, in one-letter code: GTPase Obg (479 aa).

The region spanning 2–159 (PRFVDRVVIH…RDLTLELKTV (158 aa)) is the Obg domain. One can recognise an OBG-type G domain in the interval 160–340 (ADVGLVGFPS…LIFGLSQMIS (181 aa)). Residues 166 to 173 (GFPSAGKS), 191 to 195 (FTTLV), 212 to 215 (DVPG), 292 to 295 (NKID), and 321 to 323 (STA) each bind GTP. Positions 173 and 193 each coordinate Mg(2+). The 79-residue stretch at 358 to 436 (PIPVDDSGFT…IGEMTFDWEP (79 aa)) folds into the OCT domain. A disordered region spans residues 434–479 (WEPQTPAGEPVAMSGRGTDPRLDSNKRVGAAERKAARSRRREHGDG). Basic and acidic residues predominate over residues 451–468 (TDPRLDSNKRVGAAERKA). Positions 469 to 479 (ARSRRREHGDG) are enriched in basic residues.

Belongs to the TRAFAC class OBG-HflX-like GTPase superfamily. OBG GTPase family. Monomer. Mg(2+) is required as a cofactor.

It localises to the cytoplasm. Its function is as follows. An essential GTPase which binds GTP, GDP and possibly (p)ppGpp with moderate affinity, with high nucleotide exchange rates and a fairly low GTP hydrolysis rate. Plays a role in control of the cell cycle, stress response, ribosome biogenesis and in those bacteria that undergo differentiation, in morphogenesis control. This Mycobacterium tuberculosis (strain ATCC 25177 / H37Ra) protein is GTPase Obg.